The chain runs to 95 residues: Integration host factor subunit beta (95 aa).

Positions 59–95 are disordered; it reads RVGRNPKTGQSVRLDGKFVPHFKPGKELRDRVNEDES. Over residues 72–95 the composition is skewed to basic and acidic residues; sequence LDGKFVPHFKPGKELRDRVNEDES.

The protein belongs to the bacterial histone-like protein family. In terms of assembly, heterodimer of an alpha and a beta chain.

This protein is one of the two subunits of integration host factor, a specific DNA-binding protein that functions in genetic recombination as well as in transcriptional and translational control. The chain is Integration host factor subunit beta from Ectopseudomonas mendocina (strain ymp) (Pseudomonas mendocina).